Here is a 312-residue protein sequence, read N- to C-terminus: Methionyl-tRNA formyltransferase (312 aa).

The segment at 34–54 is disordered; it reads PDAASGRRGKPQPSPVAREAA. 110-113 contributes to the (6S)-5,6,7,8-tetrahydrofolate binding site; that stretch reads SLLP.

The protein belongs to the Fmt family.

The catalysed reaction is L-methionyl-tRNA(fMet) + (6R)-10-formyltetrahydrofolate = N-formyl-L-methionyl-tRNA(fMet) + (6S)-5,6,7,8-tetrahydrofolate + H(+). Functionally, attaches a formyl group to the free amino group of methionyl-tRNA(fMet). The formyl group appears to play a dual role in the initiator identity of N-formylmethionyl-tRNA by promoting its recognition by IF2 and preventing the misappropriation of this tRNA by the elongation apparatus. The protein is Methionyl-tRNA formyltransferase of Mycobacterium tuberculosis (strain ATCC 25177 / H37Ra).